Here is a 474-residue protein sequence, read N- to C-terminus: Cyclin-dependent kinase 18 (474 aa).

A phosphoserine mark is found at Ser-14, Ser-74, Ser-89, Ser-98, Ser-117, and Ser-132. A disordered region spans residues 44–87 (DLQLGPLGRDPLQECSTFSPTDSGEEPGQLSPGVQFQRRQNQRR). The Protein kinase domain maps to 144 to 425 (YVKLDKLGEG…AEAALSHPYF (282 aa)). ATP contacts are provided by residues 150 to 158 (LGEGTYATV) and Lys-173. Asp-265 serves as the catalytic Proton acceptor. Phosphoserine occurs at positions 440 and 443.

Belongs to the protein kinase superfamily. CMGC Ser/Thr protein kinase family. CDC2/CDKX subfamily.

It catalyses the reaction L-seryl-[protein] + ATP = O-phospho-L-seryl-[protein] + ADP + H(+). It carries out the reaction L-threonyl-[protein] + ATP = O-phospho-L-threonyl-[protein] + ADP + H(+). Its function is as follows. May play a role in signal transduction cascades in terminally differentiated cells. The chain is Cyclin-dependent kinase 18 (CDK18) from Pongo abelii (Sumatran orangutan).